Consider the following 243-residue polypeptide: Mesoderm posterior protein 1 (243 aa).

A disordered region spans residues 1-86 (MAQPLCEPRS…QRQSASEREK (86 aa)). Positions 27-36 (DGNSVCSPAW) are enriched in polar residues. Positions 76-130 (GQRQSASEREKLRMRTLARALHELRRFLPPSVAPTGQNLTKIETLRLAIRYIGHL) constitute a bHLH domain. The short motif at 153 to 157 (CPLCP) is the CPLCP element. Positions 204–228 (AETASQERQEMEPSPSSPLFSSDML) are disordered.

No expression was detected in adult tissues except the testis. Expression in the testis was regulated developmentally; expressed 2 weeks after birth, and increases, reaching the full expression level in mature testes.

The protein resides in the nucleus. Its function is as follows. Transcription factor. Plays a role in the epithelialization of somitic mesoderm and in the development of cardiac mesoderm. Defines the rostrocaudal patterning of the somites by participating in distinct Notch pathways. This Mus musculus (Mouse) protein is Mesoderm posterior protein 1 (Mesp1).